The primary structure comprises 167 residues: HTH-type transcriptional repressor YetL (167 aa).

The HTH marR-type domain maps to 26–160; sequence SLELFLSLFD…FVKMLGDLFE (135 aa). The H-T-H motif DNA-binding region spans 74-97; the sequence is PTELAKRSNVTKATITGLLDGLAR.

As to quaternary structure, homodimer. The N- and C-terminal helices from both subunits stabilize YetL dimer via extensive intersubunit interactions.

With respect to regulation, binding to the yetM cis sequence is clearly inhibited by kaempferol, morin, apigenin and luteolin, slightly inhibited by quercetin and galangin, but no inhibition is observed with the other flavonoids. Flavonoid binding may induce conformational changes and modulate interaction with DNA. Its function is as follows. Negatively regulates yetM expression and its own expression. Binds specifically to corresponding single sites in the divergent yetL and yetM promoter regions, with higher affinity to the yetM region. Recognizes a 28-mer operator of double-stranded DNA that contains a palindromic sequence. This chain is HTH-type transcriptional repressor YetL (yetL), found in Bacillus subtilis (strain 168).